Here is a 489-residue protein sequence, read N- to C-terminus: Hyaluronoglucuronidase (489 aa).

The active-site Proton donor is E176. Catalysis depends on E290, which acts as the Nucleophile.

Belongs to the glycosyl hydrolase 79 family.

The enzyme catalyses Random hydrolysis of (1-&gt;3)-linkages between beta-D-glucuronate and N-acetyl-D-glucosamine residues in hyaluronate.. With respect to regulation, hyaluronidase activity is inhibited by Mn(2+), Cu(2+) and Fe(3+). Its function is as follows. Hyaluronidase that mediates hydrolysis of (1-&gt;3)-linkages between beta-D-glucuronate and N-acetyl-D-glucosamine residues in hyaluronate. Very specific to hyaluronate: not able to hydrolyze chitin, heparin or chondroitin sulfate. The chain is Hyaluronoglucuronidase from Hirudo nipponia (Korean blood-sucking leech).